A 103-amino-acid polypeptide reads, in one-letter code: UPF0235 protein RHECIAT_CH0004196 (103 aa).

The protein belongs to the UPF0235 family.

This chain is UPF0235 protein RHECIAT_CH0004196, found in Rhizobium etli (strain CIAT 652).